Consider the following 132-residue polypeptide: MVMTDPIADMLTRIRNANMVRHEKLEVPASKIKKEIADLLKREGFIRDVEYIGDNKQGILRIFLKYGANNERVITGLKRISKPGLRVYAKADEVPRVLNGLGIALVSTSKGVMTDKDARQLQTGGEVVAYVW.

Belongs to the universal ribosomal protein uS8 family. Part of the 30S ribosomal subunit. Contacts proteins S5 and S12.

Functionally, one of the primary rRNA binding proteins, it binds directly to 16S rRNA central domain where it helps coordinate assembly of the platform of the 30S subunit. This is Small ribosomal subunit protein uS8 from Bacillus mycoides (strain KBAB4) (Bacillus weihenstephanensis).